Consider the following 176-residue polypeptide: I-Kappa-B like protein G1 (176 aa).

3 ANK repeats span residues glutamate 56–serine 88, phenylalanine 93–alanine 123, and leucine 127–aspartate 156.

Belongs to the polydnaviridae I-Kappa-B-like protein family.

Functionally, suppresses the host immune response through NF-kappa-B inactivation. Possesses ankyrin repeat domains required for NF-kappa-B binding but lacks the regulatory regions required for dissociation from NF-kappa-B and degradation. Therefore, prevents host NF-kappa-B release and subsequent activation. This Microplitis demolitor (Parasitoid wasp) protein is I-Kappa-B like protein G1 (G3).